A 1201-amino-acid polypeptide reads, in one-letter code: Potassium channel subfamily T member 1 (1201 aa).

Residues 1 to 28 (MARAKLKNSPSESNSHVKTVPPATTEDV) are disordered. Residues 1–92 (MARAKLKNSP…FFIKNQRSSL (92 aa)) lie on the Cytoplasmic side of the membrane. Polar residues predominate over residues 8 to 17 (NSPSESNSHV). The chain crosses the membrane as a helical span at residues 93-115 (RIRLFNFSLKLLTCLLYIVRVLL). The Extracellular portion of the chain corresponds to 116–152 (DNPEEGIGCWECEKQNYTLFNQSTKINWSHIFWVDRK). Asparagine 131 and asparagine 136 each carry an N-linked (GlcNAc...) asparagine glycan. The helical transmembrane segment at 153 to 175 (LPLWAVQVSIALISFLETMLLIY) threads the bilayer. Residues 176-184 (LSYKGNIWE) are Cytoplasmic-facing. The helical transmembrane segment at 185–206 (QIFRISFILEMINTVPFIITIF) threads the bilayer. Residues 207-216 (WPPLRNLFIP) lie on the Extracellular side of the membrane. Residues 217–229 (VFLNCWLAKYALE) form a helical membrane-spanning segment. Residues 230 to 249 (NMINDLHRAIQRTQSAMFNQ) lie on the Cytoplasmic side of the membrane. Residues 250-272 (VLILICTLLCLVFTGTCGIQHLE) form a helical membrane-spanning segment. Residues 273–279 (RAGEKLS) lie on the Extracellular side of the membrane. Positions 280 to 300 (LFKSFYFCIVTFSTVGYGDVT) form an intramembrane region, pore-forming. The K(+) site is built by valine 294 and glycine 295. Topologically, residues 301 to 304 (PKIW) are extracellular. The chain crosses the membrane as a helical span at residues 305-326 (PSQLLVVIMICVALVVLPLQFE). The Cytoplasmic segment spans residues 327 to 1201 (ELVYLWMERQ…NPETRDETQL (875 aa)). The RCK N-terminal 1 domain occupies 350–486 (EKHVVLCVSS…FHVKFADHVV (137 aa)). Residues leucine 511, histidine 514, serine 536, and asparagine 538 each coordinate Na(+). Zn(2+) contacts are provided by cysteine 750 and cysteine 751. Arginine 753 and lysine 756 together coordinate K(+). Residues arginine 753 and lysine 756 each coordinate Na(+). Zn(2+) contacts are provided by cysteine 758 and histidine 760. Asparagine 761, tyrosine 769, and glycine 770 together coordinate K(+). Position 771 (phenylalanine 771) interacts with Na(+). Positions 773–913 (NKLIIVSAET…QFRAKDSYSL (141 aa)) constitute an RCK N-terminal 2 domain. The K(+) site is built by serine 779, leucine 810, aspartate 812, glycine 834, and aspartate 857. The disordered stretch occupies residues 1175 to 1201 (NDGHSRKSSCSNKLGPCNPETRDETQL).

This sequence belongs to the potassium channel family. Calcium-activated (TC 1.A.1.3) subfamily. KCa4.1/KCNT1 sub-subfamily. As to quaternary structure, homotetramer; which constitutes the Na(+)-activated K(+) channel. Interacts with KCNT2; these heterodimer channels differ from the homomers in their unitary conductance, kinetic behavior, subcellular localization, and response to activation of protein kinase C. Post-translationally, phosphorylated by protein kinase C. Phosphorylation of the C-terminal domain increases channel activity.

It is found in the cell membrane. The enzyme catalyses K(+)(in) = K(+)(out). Activated by high intracellular Na(+). In addition to activation by Na(+), is cooperatively activated by intracellular Cl(-) levels. Inhibited by Zn(2+). Activated upon stimulation of G-protein coupled receptors, such as CHRM1 and GRIA1. Functionally, sodium-activated K(+) channel. Acts as an important mediator of neuronal membrane excitability. Contributes to the delayed outward currents. Regulates of neuronal bursting in sensory neurons. Contributes to synaptic development and plasticity. The protein is Potassium channel subfamily T member 1 (KCNT1) of Gallus gallus (Chicken).